The sequence spans 294 residues: Energy-coupling factor transporter ATP-binding protein EcfA1 (294 aa).

The region spanning 27–260 is the ABC transporter domain; it reads IEFENVYFAY…EERLLKMQLD (234 aa). 60-67 contributes to the ATP binding site; the sequence is GHNGSGKS.

Belongs to the ABC transporter superfamily. Energy-coupling factor EcfA family. In terms of assembly, forms a stable energy-coupling factor (ECF) transporter complex composed of 2 membrane-embedded substrate-binding proteins (S component), 2 ATP-binding proteins (A component) and 2 transmembrane proteins (T component).

The protein localises to the cell membrane. Functionally, ATP-binding (A) component of a common energy-coupling factor (ECF) ABC-transporter complex. Unlike classic ABC transporters this ECF transporter provides the energy necessary to transport a number of different substrates. This chain is Energy-coupling factor transporter ATP-binding protein EcfA1, found in Ureaplasma parvum serovar 3 (strain ATCC 700970).